The sequence spans 316 residues: Calumenin-B (316 aa).

The signal sequence occupies residues 1-19; the sequence is MELRPLVMCFALCVVYASS. 6 consecutive EF-hand domains span residues 69–104, 105–140, 152–187, 189–224, 230–265, and 266–301; these read ESKE…SQKR, WIYD…YILD, QMIS…EEYD, MKDI…QEGD, WVRT…SDYD, and HAEA…FVGS. Residues D82, D84, D86, Y88, E93, D118, N120, D122, and E129 each coordinate Ca(2+). N-linked (GlcNAc...) asparagine glycosylation is present at N132. Ca(2+) is bound by residues D165, D167, D169, K171, E176, D202, N204, D206, E213, D243, N245, D247, R249, E254, D279, D281, D283, K285, and E290. The short motif at 313 to 316 is the Prevents secretion from ER element; sequence HDEF.

It belongs to the CREC family. As to quaternary structure, interacts with ggcx.

The protein resides in the endoplasmic reticulum membrane. Its subcellular location is the golgi apparatus. The protein localises to the secreted. It is found in the melanosome. It localises to the sarcoplasmic reticulum lumen. Its function is as follows. Involved in regulation of vitamin K-dependent carboxylation of multiple N-terminal glutamate residues. Seems to inhibit gamma-carboxylase ggcx. Binds 7 calcium ions with a low affinity. This Salmo salar (Atlantic salmon) protein is Calumenin-B (calub).